The primary structure comprises 318 residues: NADH-ubiquinone oxidoreductase chain 1 (318 aa).

The next 8 membrane-spanning stretches (helical) occupy residues 5 to 25 (IISSFLTFVMILIAVAFLTLI), 69 to 89 (SIFLFILAPALAISLALILWI), 102 to 122 (LGLMFILAISSLSVYSLLTSG), 148 to 168 (LGLMIVALTILSGGFDLKLFI), 174 to 194 (IWLLFPMWPIFLMWFISTLAE), 215 to 235 (VEFSGGLFALFFLAEYANILF), 253 to 273 (LYFSASMTMKTMFLIFLFLWV), and 293 to 313 (FLPITLSLLIFQFSMSLFFGV).

The protein belongs to the complex I subunit 1 family.

Its subcellular location is the mitochondrion inner membrane. The enzyme catalyses a ubiquinone + NADH + 5 H(+)(in) = a ubiquinol + NAD(+) + 4 H(+)(out). Its function is as follows. Core subunit of the mitochondrial membrane respiratory chain NADH dehydrogenase (Complex I) that is believed to belong to the minimal assembly required for catalysis. Complex I functions in the transfer of electrons from NADH to the respiratory chain. The immediate electron acceptor for the enzyme is believed to be ubiquinone. The protein is NADH-ubiquinone oxidoreductase chain 1 (MT-ND1) of Myxine glutinosa (Atlantic hagfish).